Here is a 278-residue protein sequence, read N- to C-terminus: Release factor glutamine methyltransferase (278 aa).

S-adenosyl-L-methionine-binding positions include 117-121, Asp140, and Asn184; that span reads GTGSG. 184 to 187 contributes to the substrate binding site; the sequence is NPPY.

This sequence belongs to the protein N5-glutamine methyltransferase family. PrmC subfamily.

The enzyme catalyses L-glutaminyl-[peptide chain release factor] + S-adenosyl-L-methionine = N(5)-methyl-L-glutaminyl-[peptide chain release factor] + S-adenosyl-L-homocysteine + H(+). In terms of biological role, methylates the class 1 translation termination release factors RF1/PrfA and RF2/PrfB on the glutamine residue of the universally conserved GGQ motif. The sequence is that of Release factor glutamine methyltransferase from Staphylococcus aureus (strain NCTC 8325 / PS 47).